The primary structure comprises 247 residues: Cell division protein ZapD (247 aa).

Belongs to the ZapD family. As to quaternary structure, interacts with FtsZ.

The protein resides in the cytoplasm. Cell division factor that enhances FtsZ-ring assembly. Directly interacts with FtsZ and promotes bundling of FtsZ protofilaments, with a reduction in FtsZ GTPase activity. In Shigella sonnei (strain Ss046), this protein is Cell division protein ZapD.